The following is a 208-amino-acid chain: Small ribosomal subunit protein uS4 (208 aa).

Positions 98 to 161 (QRLDNVVYRM…KTNSQILRAI (64 aa)) constitute an S4 RNA-binding domain.

This sequence belongs to the universal ribosomal protein uS4 family. As to quaternary structure, part of the 30S ribosomal subunit. Contacts protein S5. The interaction surface between S4 and S5 is involved in control of translational fidelity.

One of the primary rRNA binding proteins, it binds directly to 16S rRNA where it nucleates assembly of the body of the 30S subunit. In terms of biological role, with S5 and S12 plays an important role in translational accuracy. The protein is Small ribosomal subunit protein uS4 of Sulfurovum sp. (strain NBC37-1).